The chain runs to 915 residues: MIGKLIKKIFGSKNERELKRMGKVVTLINALEPELQKLSDEQLKEKTTELRNRYSAGETLDQLLPEAFAVVREAGRRVLGMRHFDVQLIGGMTLHEGRIAEMRTGEGKTLVSTLPAYLHALAGKGVHVVTVNDYLASRDANWMRPLYEALGMSVGVIQSMQPAVLKRQAYASDITYGTNNEYGFDYLRDNMALSKQDKVQRPLNYAIIDEVDSILIDEARTPLIISGAAENSAEMYKRVNQLVTKLTRQIDNGEDGDRRVISVAGDFTVDEKSRQVELTEGGHQHVEELLIKANLLAPDQNLYAANNLTLLHHVNSALRAHALFHRDIEYIVQEGQVVLIDEHTGRTMPGRRLSEGLHQAIEAKESVEIQSESQTLASTTFQNYFRLYPTLAGMTGTADTEAYEFREIYGLDVVVIPTNRPIQRIDMNDKVYLSLEEKYAAIVEDVKAFSANNAPVLVGTASIETSEEMSRRLTSAGIKHQVLNAKFHAQEAEIIAQAGRPGTVTIATNMAGRGTDIVLGGRWESEVEKLENATPEQIDAIKAEWEKRHDIVLAAGGLHIVGTERHESRRIDNQLRGRAGRQGDPGVTRFYLSLEDNLMRIFASDRMRNFMQALGMEKGEAIEHRMVNNAIENAQRKVEGRNFDIRKQLLEFDDVANDQRQIVYHQRNELLDAENIRDTITVVRADVLNDVVSQYIPPQSIEDMWDIAGLEKQLEVDFGLRLSIAKWLEEDTRLHEEPLRKRILDEVQATYDAKCERIGEIMLEIEKQVMLQVLDNSWKEHLAAMDHLRQGINLRSYAQRNPKQEYKRESFELFQQLLQRVKHETIHLLARVEPITREQMEAMEIQRREELARQKMQMRHEQLSAMPESPEAESEPAAAPQRQAPVVREGRKVGRNDPCPCGSGKKYKNCHGQLE.

Residues Gln-87, 105–109, and Asp-516 each bind ATP; that span reads GEGKT. Residues 854–915 form a disordered region; sequence QKMQMRHEQL…KYKNCHGQLE (62 aa). The Zn(2+) site is built by Cys-899, Cys-901, Cys-910, and His-911.

It belongs to the SecA family. Monomer and homodimer. Part of the essential Sec protein translocation apparatus which comprises SecA, SecYEG and auxiliary proteins SecDF-YajC and YidC. Requires Zn(2+) as cofactor.

The protein localises to the cell inner membrane. It localises to the cytoplasm. The catalysed reaction is ATP + H2O + cellular proteinSide 1 = ADP + phosphate + cellular proteinSide 2.. In terms of biological role, part of the Sec protein translocase complex. Interacts with the SecYEG preprotein conducting channel. Has a central role in coupling the hydrolysis of ATP to the transfer of proteins into and across the cell membrane, serving both as a receptor for the preprotein-SecB complex and as an ATP-driven molecular motor driving the stepwise translocation of polypeptide chains across the membrane. This chain is Protein translocase subunit SecA, found in Cellvibrio japonicus (strain Ueda107) (Pseudomonas fluorescens subsp. cellulosa).